We begin with the raw amino-acid sequence, 404 residues long: Tryptophan synthase beta chain (404 aa).

Lys-94 carries the N6-(pyridoxal phosphate)lysine modification.

Belongs to the TrpB family. As to quaternary structure, tetramer of two alpha and two beta chains. It depends on pyridoxal 5'-phosphate as a cofactor.

The catalysed reaction is (1S,2R)-1-C-(indol-3-yl)glycerol 3-phosphate + L-serine = D-glyceraldehyde 3-phosphate + L-tryptophan + H2O. Its pathway is amino-acid biosynthesis; L-tryptophan biosynthesis; L-tryptophan from chorismate: step 5/5. Its function is as follows. The beta subunit is responsible for the synthesis of L-tryptophan from indole and L-serine. The sequence is that of Tryptophan synthase beta chain from Staphylococcus aureus (strain bovine RF122 / ET3-1).